Consider the following 201-residue polypeptide: Ribonuclease HII (201 aa).

The RNase H type-2 domain maps to 12-201; the sequence is GIVCGIDEVG…FAPVAQYMLF (190 aa). 3 residues coordinate a divalent metal cation: D18, E19, and D113.

Belongs to the RNase HII family. Mn(2+) is required as a cofactor. The cofactor is Mg(2+).

It localises to the cytoplasm. The enzyme catalyses Endonucleolytic cleavage to 5'-phosphomonoester.. Functionally, endonuclease that specifically degrades the RNA of RNA-DNA hybrids. This is Ribonuclease HII (rnhB) from Paramagnetospirillum magneticum (strain ATCC 700264 / AMB-1) (Magnetospirillum magneticum).